The chain runs to 101 residues: NAD(P)H-quinone oxidoreductase subunit 4L, chloroplastic (101 aa).

3 helical membrane passes run 2–22 (MLEY…YGLI), 32–52 (MCLE…SDFF), and 61–81 (ILSI…PAIV).

It belongs to the complex I subunit 4L family. As to quaternary structure, NDH is composed of at least 16 different subunits, 5 of which are encoded in the nucleus.

It localises to the plastid. Its subcellular location is the chloroplast thylakoid membrane. The enzyme catalyses a plastoquinone + NADH + (n+1) H(+)(in) = a plastoquinol + NAD(+) + n H(+)(out). It catalyses the reaction a plastoquinone + NADPH + (n+1) H(+)(in) = a plastoquinol + NADP(+) + n H(+)(out). Its function is as follows. NDH shuttles electrons from NAD(P)H:plastoquinone, via FMN and iron-sulfur (Fe-S) centers, to quinones in the photosynthetic chain and possibly in a chloroplast respiratory chain. The immediate electron acceptor for the enzyme in this species is believed to be plastoquinone. Couples the redox reaction to proton translocation, and thus conserves the redox energy in a proton gradient. The sequence is that of NAD(P)H-quinone oxidoreductase subunit 4L, chloroplastic from Populus alba (White poplar).